The sequence spans 75 residues: Metallothionein-like protein 1 (75 aa).

The protein belongs to the metallothionein superfamily. Type 15 family.

Its function is as follows. Metallothioneins have a high content of cysteine residues that bind various heavy metals. This Trifolium repens (Creeping white clover) protein is Metallothionein-like protein 1 (MT1B).